The sequence spans 242 residues: E3 ubiquitin-protein ligase AIRP2 (242 aa).

The RING-type zinc finger occupies 146-184 (CGICLEIRNKVVLPTCNHSMCINCYRNWRARSQSCPFCR).

Interacts with ATP1/SDIRIP1. Expressed in germinating seeds, flower organs and siliques.

Its subcellular location is the cytoplasm. It is found in the cytosol. It catalyses the reaction S-ubiquitinyl-[E2 ubiquitin-conjugating enzyme]-L-cysteine + [acceptor protein]-L-lysine = [E2 ubiquitin-conjugating enzyme]-L-cysteine + N(6)-ubiquitinyl-[acceptor protein]-L-lysine.. Functionally, possesses E3 ubiquitin-protein ligase activity in vitro when associated with the E2 enzyme UBC8 in vitro. Plays combinatory roles with AIRP1 in the positive regulation of the abscisic acid-mediated drought stress response. Plays a positive role in abscisic acid- and high salinity-regulated seed germination through the ubiquitin-proteasome-dependent down-regulation of ATP1/SDIRIP1. This is E3 ubiquitin-protein ligase AIRP2 from Arabidopsis thaliana (Mouse-ear cress).